A 159-amino-acid chain; its full sequence is Cytochrome c-type biogenesis CcmH-like mitochondrial protein (159 aa).

Topologically, residues 1-82 (MEKTDEERKK…ETVLYAPKFD (82 aa)) are mitochondrial intermembrane. Residues Cys-27 and Cys-30 each contribute to the heme site. A helical membrane pass occupies residues 83 to 105 (LQTAALWLTPVIIAGGTAAGIVY). The Mitochondrial matrix segment spans residues 106–159 (QKHRLRKNVDIMALNLIRGVPLTPKERVTILDVLIPPSPPPQGVVSRLRRWLNR).

This sequence belongs to the CcmH/CycL/Ccl2/NrfF family. As to quaternary structure, interacts (via N-terminus) with CYTC-1. Interacts with CCMFN1 and CCMFN2.

It is found in the mitochondrion inner membrane. Functionally, plays a central role in mitochondrial cytochrome c maturation. Probable component of a heme lyase complex involved in the reduction of apocytochrome c. Forms a complex with CCMF proteins (CCMFC, CCMFN1 and CCMFN2) that performs the assembly of heme with c-type apocytochromes in mitochondria. The protein is Cytochrome c-type biogenesis CcmH-like mitochondrial protein of Arabidopsis thaliana (Mouse-ear cress).